The following is a 183-amino-acid chain: Ferritin light chain 1 (183 aa).

The Ferritin-like diiron domain maps to 7 to 156 (QNYSTEVEAA…NHLTNLRRVA (150 aa)). Residues Glu-54, Glu-57, Glu-58, Glu-61, and Glu-64 each contribute to the Fe cation site.

The protein belongs to the ferritin family. As to quaternary structure, oligomer of 24 subunits. There are two types of subunits: L (light) chain and H (heavy) chain. The major chain can be light or heavy, depending on the species and tissue type. The functional molecule forms a roughly spherical shell with a diameter of 12 nm and contains a central cavity into which the insoluble mineral iron core is deposited. Interacts with NCOA4.

It localises to the cytoplasm. It is found in the cytoplasmic vesicle. The protein localises to the autophagosome. The protein resides in the autolysosome. Stores iron in a soluble, non-toxic, readily available form. Important for iron homeostasis. Iron is taken up in the ferrous form and deposited as ferric hydroxides after oxidation. Also plays a role in delivery of iron to cells. Mediates iron uptake in capsule cells of the developing kidney. Degraded to release iron upon autophagy activation by nutrient starvation. The polypeptide is Ferritin light chain 1 (Ftl1) (Mus musculus (Mouse)).